Reading from the N-terminus, the 455-residue chain is Dihydrolipoyllysine-residue succinyltransferase component of 2-oxoglutarate dehydrogenase complex, mitochondrial (455 aa).

Residues 1–68 constitute a mitochondrion transit peptide; that stretch reads MLSRSRCVSR…RFFRTTAVCK (68 aa). One can recognise a Lipoyl-binding domain in the interval 71-145; the sequence is VITVKTPAFA…EGGTPLFTLR (75 aa). Residue serine 82 is modified to Phosphoserine. Position 111 is an N6-lipoyllysine (lysine 111). Low complexity predominate over residues 153-173; that stretch reads KAKPAEAPAAAAPKAEPAVSA. The interval 153–214 is disordered; sequence KAKPAEAPAA…KPTAAPPVAE (62 aa). Lysine 155 carries the post-translational modification N6-acetyllysine. The segment covering 174–195 has biased composition (pro residues); it reads VPPPPAASIPTQMPPVPSPPQP. The catalytic stretch occupies residues 221 to 453; that stretch reads LRAEHREKMN…AVEDPRVLLL (233 aa). Lysine 269, lysine 274, lysine 275, lysine 279, and lysine 309 each carry N6-acetyllysine. Residues histidine 426 and aspartate 430 contribute to the active site.

It belongs to the 2-oxoacid dehydrogenase family. As to quaternary structure, the 2-oxoglutarate dehydrogenase complex is composed of OGDH (2-oxoglutarate dehydrogenase; E1), DLST (dihydrolipoamide succinyltransferase; E2), DLD (dihydrolipoamide dehydrogenase; E3) and the assembly factor KGD4. It contains multiple copies of the three enzymatic components (E1, E2 and E3). In the nucleus, the 2-oxoglutarate dehydrogenase complex associates with KAT2A. Interacts with ABHD11; this interaction maintains the functional lipoylation of the 2-oxoglutarate dehydrogenase complex. The cofactor is (R)-lipoate.

It is found in the mitochondrion matrix. The protein resides in the nucleus. The enzyme catalyses N(6)-[(R)-dihydrolipoyl]-L-lysyl-[protein] + succinyl-CoA = N(6)-[(R)-S(8)-succinyldihydrolipoyl]-L-lysyl-[protein] + CoA. It participates in amino-acid degradation; L-lysine degradation via saccharopine pathway; glutaryl-CoA from L-lysine: step 6/6. It functions in the pathway carbohydrate metabolism; tricarboxylic acid cycle. Dihydrolipoamide succinyltransferase (E2) component of the 2-oxoglutarate dehydrogenase complex. The 2-oxoglutarate dehydrogenase complex catalyzes the overall conversion of 2-oxoglutarate to succinyl-CoA and CO(2). The 2-oxoglutarate dehydrogenase complex is mainly active in the mitochondrion. A fraction of the 2-oxoglutarate dehydrogenase complex also localizes in the nucleus and is required for lysine succinylation of histones: associates with KAT2A on chromatin and provides succinyl-CoA to histone succinyltransferase KAT2A. In Sus scrofa (Pig), this protein is Dihydrolipoyllysine-residue succinyltransferase component of 2-oxoglutarate dehydrogenase complex, mitochondrial.